The chain runs to 251 residues: Pyruvate formate-lyase-activating enzyme (251 aa).

Residues 15–244 (VDGPGLRYIL…KEAYRYVNFN (230 aa)) enclose the Radical SAM core domain. Positions 29, 33, and 36 each coordinate [4Fe-4S] cluster. Residues 35 to 37 (YCH), Gly79, 134 to 136 (DIK), and His207 each bind S-adenosyl-L-methionine.

The protein belongs to the organic radical-activating enzymes family. [4Fe-4S] cluster is required as a cofactor.

The protein resides in the cytoplasm. It catalyses the reaction glycyl-[formate C-acetyltransferase] + reduced [flavodoxin] + S-adenosyl-L-methionine = glycin-2-yl radical-[formate C-acetyltransferase] + semiquinone [flavodoxin] + 5'-deoxyadenosine + L-methionine + H(+). Functionally, activation of pyruvate formate-lyase under anaerobic conditions by generation of an organic free radical, using S-adenosylmethionine and reduced flavodoxin as cosubstrates to produce 5'-deoxy-adenosine. This chain is Pyruvate formate-lyase-activating enzyme (pflA), found in Staphylococcus epidermidis (strain ATCC 12228 / FDA PCI 1200).